The primary structure comprises 592 residues: Probable tubulin polyglutamylase TTLL2 (592 aa).

Disordered stretches follow at residues 1–23 (MRGR…TTTP) and 51–77 (GVSI…MAED). Residues 7 to 23 (CSSTQSQALGSLRTTTP) are compositionally biased toward polar residues. The TTL domain occupies 84 to 427 (LKPLVFRVDE…NGLRNEGREA (344 aa)). Residues Lys212, 218–219 (RG), 240–243 (QKYI), and 253–255 (KCD) each bind ATP. Position 218 (Arg218) interacts with a protein. An L-glutamate-binding site is contributed by Arg279. An ATP-binding site is contributed by 298-299 (TN). 2 residues coordinate L-glutamate: Ser301 and Lys321. Residues Asp373, Glu386, and Asn388 each contribute to the Mg(2+) site. Lys404 serves as a coordination point for L-glutamate.

Belongs to the tubulin--tyrosine ligase family. It depends on Mg(2+) as a cofactor. As to expression, testis.

Probable tubulin polyglutamylase that generates side chains of glutamate on the gamma-carboxyl group of specific glutamate residues within the C-terminal tail of target proteins. Similar to TTLL1, may acquire enzymatic activity only in complex with other proteins as it is most likely lacking domains important for autonomous activity. Probably involved in the side-chain initiation step of the polyglutamylation reaction rather than the elongation step. The sequence is that of Probable tubulin polyglutamylase TTLL2 from Homo sapiens (Human).